A 592-amino-acid polypeptide reads, in one-letter code: MAGEGRVVRVNGPLVVADGMRNAQMFEVVEVGELRLVGEITRIEGDRAYIQVYEATDGIKPGEKAYRTGSLLSVELGPGLMGGIFDGLQRPLDRIAESVKSPFVTRGVKVPALERNKKWHVIPVAKKGDKVSPGDIIAKVNETDLIEHRIIVPPNVHGTLKEISPEGDYTVEDVIARVDMEGDVKELKLYQRWPVRIPRPFKEKLEPTEPLLTGTRVVDTIFPIAKGGTAAIPGPFGSGKTVTLQSLAKWSEAKVVIYVGCGERGNEMTDELRQFPKLKDPWTGKPLLQRTILVANTSNMPVAARESSIYVGVTMAEYFRDQGYDVLLVADSTSRWAEALRELGGRMEEMPAEEGFPSYLPSRLAEYYERAGRVIALGKPERFGSVSIASAVSPPGGDFTEPVTSNTLRFVRVFWPLDVSLAQARHYPAINWIQGFSAYVDLVASWWHKNVDPTWFEMRSVLVKILLREDELRQIVRLVGPESLSDKDKLILEASKLIRDAFLKQNAFDDIDAFSSPQKQAKIMRLIYDFYTNASQLLDKGLTLKKILEKVGSFEPDIVRVKYTVKNDELNKIDELDNKLKEAFDSLLKEVA.

234 to 241 is an ATP binding site; it reads GPFGSGKT.

The protein belongs to the ATPase alpha/beta chains family. Has multiple subunits with at least A(3), B(3), C, D, E, F, H, I and proteolipid K(x).

The protein resides in the cell membrane. It catalyses the reaction ATP + H2O + 4 H(+)(in) = ADP + phosphate + 5 H(+)(out). Produces ATP from ADP in the presence of a proton gradient across the membrane. The archaeal alpha chain is a catalytic subunit. Functionally, component of the A-type ATP synthase that produces ATP from ADP in the presence of a proton gradient across the membrane. The A chain is the catalytic subunit. The polypeptide is A-type ATP synthase subunit A (Sulfolobus acidocaldarius (strain ATCC 33909 / DSM 639 / JCM 8929 / NBRC 15157 / NCIMB 11770)).